The primary structure comprises 249 residues: MDDTGAAPVVIFGGRSQIGGELARRLAAGATMVLAARNADQLADQAAALRAAGAIAVHTREFDADDLAAHGPLVASLVAEHGPIGTAVLAFGILGDQARAETDAAHAVAIVHTDYVAQVSLLTHLAAAMRTAGRGSLVVFSSVAGIRVRRANYVYGSAKAGLDGFASGLADALHGTGVRLLIARPGFVIGRMTEGMTPAPLSVTPERVAAATACALVNGKRVVWIPWALRPMFVALRLLPRFVWRRMPR.

Residue 11–34 (IFGGRSQIGGELARRLAAGATMVL) coordinates NADP(+). A substrate-binding site is contributed by Ser-142. Tyr-155 serves as the catalytic Proton acceptor.

Belongs to the short-chain dehydrogenases/reductases (SDR) family.

This is an uncharacterized protein from Mycobacterium tuberculosis (strain CDC 1551 / Oshkosh).